The following is a 440-amino-acid chain: Xylose isomerase (440 aa).

Active-site residues include His101 and Asp104. Positions 232, 268, 271, 296, 307, 309, and 339 each coordinate Mg(2+).

This sequence belongs to the xylose isomerase family. Homotetramer. The cofactor is Mg(2+).

It is found in the cytoplasm. The enzyme catalyses alpha-D-xylose = alpha-D-xylulofuranose. This Enterobacter sp. (strain 638) protein is Xylose isomerase.